The following is an 84-amino-acid chain: Small ribosomal subunit protein bS20 (84 aa).

Residues 62 to 72 (KNKARRLKSRA) show a composition bias toward basic residues. Residues 62-84 (KNKARRLKSRAARWSNSATAASR) form a disordered region. The segment covering 75–84 (WSNSATAASR) has biased composition (polar residues).

This sequence belongs to the bacterial ribosomal protein bS20 family.

Functionally, binds directly to 16S ribosomal RNA. This Mycoplasmoides gallisepticum (strain R(low / passage 15 / clone 2)) (Mycoplasma gallisepticum) protein is Small ribosomal subunit protein bS20.